The following is an 806-amino-acid chain: Centrosomal protein of 85 kDa-like (806 aa).

Disordered stretches follow at residues 1-27, 51-89, and 101-146; these read MWGR…AGSD, NNHL…LSFK, and HVMP…SSLD. S15 is subject to Phosphoserine. Over residues 60–74 the composition is skewed to polar residues; that stretch reads TSDSGDTGIGTSCSD. Over residues 135–146 the composition is skewed to basic and acidic residues; sequence DHSRGERDSSLD. At S207 the chain carries Phosphoserine. The disordered stretch occupies residues 308-353; the sequence is PLEGRTTDDSYSLAPWQQPQTEEFQQGSETPMQVLTGSSRQSYSPP. Positions 322–351 are enriched in polar residues; sequence PWQQPQTEEFQQGSETPMQVLTGSSRQSYS. Positions 442-644 form a coiled coil; it reads QEELEQKLAS…ILEIQSMQGK (203 aa).

Belongs to the CEP85 family.

The protein resides in the cytoplasm. It localises to the cytoskeleton. The protein localises to the microtubule organizing center. Its subcellular location is the centrosome. Plays an essential role in neuronal cell migration. The polypeptide is Centrosomal protein of 85 kDa-like (Mus musculus (Mouse)).